A 401-amino-acid polypeptide reads, in one-letter code: Hemorrhagic metalloproteinase-disintegrin-like kaouthiagin (401 aa).

The 195-residue stretch at 14–208 (KYIEFYVIVD…DRPQCILNKP (195 aa)) folds into the Peptidase M12B domain. Glu-17 and Asp-101 together coordinate Ca(2+). N-linked (GlcNAc...) asparagine glycosylation is present at Asn-112. Cystine bridges form between Cys-125–Cys-203, Cys-164–Cys-187, and Cys-166–Cys-171. Zn(2+) is bound at residue His-149. The active site involves Glu-150. His-153 and His-159 together coordinate Zn(2+). Ca(2+) contacts are provided by Cys-203, Asn-206, Ile-218, Asn-221, Phe-223, Glu-225, Glu-228, and Asp-231. The 70-residue stretch at 216–285 (PAICGNYFVE…ECPTDSLQRN (70 aa)) folds into the Disintegrin domain. Cystine bridges form between Cys-219/Cys-248, Cys-230/Cys-243, Cys-232/Cys-238, Cys-257/Cys-277, Cys-264/Cys-296, Cys-289/Cys-301, Cys-308/Cys-358, Cys-323/Cys-366, Cys-336/Cys-346, Cys-353/Cys-389, and Cys-383/Cys-394. The D/ECD-tripeptide motif lies at 263 to 265 (DCD). Ca(2+) is bound by residues Asp-265, Leu-266, Glu-268, and Asp-280.

This sequence belongs to the venom metalloproteinase (M12B) family. P-III subfamily. P-IIIa sub-subfamily. Monomer. It depends on Zn(2+) as a cofactor. In terms of tissue distribution, expressed by the venom gland.

The protein resides in the secreted. Snake venom zinc protease that inhibits hemostasis by binding and cleaving the vWF in humans. Also has and inhibitory effect on the collagen-induced platelet aggregation. The sequence is that of Hemorrhagic metalloproteinase-disintegrin-like kaouthiagin from Naja kaouthia (Monocled cobra).